The sequence spans 938 residues: Probable outer membrane protein pmp15 (938 aa).

An N-terminal signal peptide occupies residues 1-17 (MRFFCFGMLLPFTFVLA). The 280-residue stretch at 659 to 938 (DEEKGHAASL…YLNVASRMRF (280 aa)) folds into the Autotransporter domain.

The protein belongs to the PMP outer membrane protein family.

The protein resides in the secreted. It localises to the cell wall. Its subcellular location is the cell outer membrane. The chain is Probable outer membrane protein pmp15 (pmp15) from Chlamydia pneumoniae (Chlamydophila pneumoniae).